The following is a 952-amino-acid chain: Substrate-adhesion molecule (952 aa).

A signal peptide spans 1-25; the sequence is MKSQKIGSMILLIGILLAIFNFAYS. Residues 26-527 lie on the Extracellular side of the membrane; sequence DDDIERFSIN…TWFFDTNVET (502 aa). N78, N182, N231, N243, and N412 each carry an N-linked (GlcNAc...) asparagine glycan. The EGF-like domain maps to 438-471; sequence EIRRCKDSCNGYGTCNTANYTCVCDSAHMGETCN. Cystine bridges form between C442/C452, C446/C459, and C461/C470. N-linked (GlcNAc...) asparagine glycosylation occurs at N456. Residues 528–548 form a helical membrane-spanning segment; the sequence is GVIALACIFIAFVGILYIIDI. Topologically, residues 549–591 are cytoplasmic; that stretch reads GTTVPIDIKRAKDYAEENKSGQFPKATHEEASVLWWRDQRSHK. A helical membrane pass occupies residues 592-612; sequence AWTFMDQFQLISLVSHIGVVF. Over 613 to 678 the chain is Extracellular; it reads PSRFISFTEY…GDLYLLPNIL (66 aa). A helical transmembrane segment spans residues 679–699; the sequence is FWFGLLLGVFLVPLLLAYAII. Residues 700–722 are Cytoplasmic-facing; sequence SFMESLIHWKEVVTNRLIHVLVR. A helical transmembrane segment spans residues 723–743; it reads ILTFGYIGVLIAASFAMVTPL. The Extracellular segment spans residues 744–752; that stretch reads HDYRIIIPG. A helical membrane pass occupies residues 753-773; that stretch reads AIIFVLYGIGLPIAIWFLLAV. Residues 774–801 are Cytoplasmic-facing; that stretch reads PEARLHNPTFKQRFGCLYVHYKPKTDHR. A helical membrane pass occupies residues 802 to 822; sequence FVVFMFIKRFIMAVIIGILSF. At 823–837 the chain is on the extracellular side; it reads KPMTNYPLTGTDLAV. A helical transmembrane segment spans residues 838-858; that stretch reads PIVQVVVIDIALIGYAVLLFI. At 859 to 868 the chain is on the cytoplasmic side; the sequence is RKPYFDHYQL. Residues 869 to 889 traverse the membrane as a helical segment; sequence WLEYLLTAINIVTVSLSLTHI. Over 890–897 the chain is Extracellular; that stretch reads KSPSAAGE. The chain crosses the membrane as a helical span at residues 898 to 918; that stretch reads LIACLIQALALVACIAAYVVA. Residues 919-952 are Cytoplasmic-facing; sequence WLQMRSSFIKKVKKYLCCCCKSSKSSGEIDLSKK.

The protein localises to the cell membrane. In terms of biological role, involved in substrate adhesion, myosin-independent cytokinesis, organization of actin cytoskeleton, and phagocytosis. The chain is Substrate-adhesion molecule (sadA) from Dictyostelium discoideum (Social amoeba).